Reading from the N-terminus, the 245-residue chain is MKLKKRVSMFLVALTMCGGLFVTPAKAVKTTNYAEEIAALQPGTTPEEIMKSASQIAKQQHVKQDVILKQFYKEITADKAEGDRLAKESGMSIMGGSSGTKKLPTSAKGNIYYTNSYTAYYNHGHVGMYSAADKIVESVPSDGVRQIAYNARDVEDNSIVQTVSVSSSQKTAAADWAVSKVGDPYSFNFVNNRNTGHDGAKNCSKLLWSAFLLKAGIDIDSNGGLGVYPRDITSSSYTTTIMTIY.

The N-terminal stretch at 1–27 is a signal peptide; the sequence is MKLKKRVSMFLVALTMCGGLFVTPAKA.

This is an uncharacterized protein from Bacillus subtilis (strain 168).